Consider the following 598-residue polypeptide: tRNA(Met) cytidine acetyltransferase TmcA (598 aa).

Residues Gln141, 163–172 (GRGKSTLAGK), and Arg288 contribute to the ATP site. The N-acetyltransferase domain maps to 332–490 (TDLRRLFDAD…HSAMMLYPLS (159 aa)). Acetyl-CoA-binding positions include 411–413 (IAV), 418–424 (QNQGIGS), and Arg462.

The protein belongs to the RNA cytidine acetyltransferase family. TmcA subfamily.

It localises to the cytoplasm. The catalysed reaction is cytidine(34) in elongator tRNA(Met) + acetyl-CoA + ATP + H2O = N(4)-acetylcytidine(34) in elongator tRNA(Met) + ADP + phosphate + CoA + H(+). In terms of biological role, catalyzes the formation of N(4)-acetylcytidine (ac(4)C) at the wobble position of tRNA(Met), by using acetyl-CoA as an acetyl donor and ATP (or GTP). This chain is tRNA(Met) cytidine acetyltransferase TmcA, found in Haemophilus ducreyi (strain 35000HP / ATCC 700724).